The chain runs to 187 residues: Protein GrpE (187 aa).

Positions 1-30 (MEKKETKSESEKTNKQDNKNTKSQKKENLN) are disordered.

This sequence belongs to the GrpE family. Homodimer.

It is found in the cytoplasm. Its function is as follows. Participates actively in the response to hyperosmotic and heat shock by preventing the aggregation of stress-denatured proteins, in association with DnaK and GrpE. It is the nucleotide exchange factor for DnaK and may function as a thermosensor. Unfolded proteins bind initially to DnaJ; upon interaction with the DnaJ-bound protein, DnaK hydrolyzes its bound ATP, resulting in the formation of a stable complex. GrpE releases ADP from DnaK; ATP binding to DnaK triggers the release of the substrate protein, thus completing the reaction cycle. Several rounds of ATP-dependent interactions between DnaJ, DnaK and GrpE are required for fully efficient folding. This chain is Protein GrpE, found in Borreliella burgdorferi (strain ATCC 35210 / DSM 4680 / CIP 102532 / B31) (Borrelia burgdorferi).